The chain runs to 614 residues: MRPPWYPLHTPSLAFPLLFLLLSLLGGGARAEGREDPQLLVRVRGGQLRGIRLKAPGGPVSAFLGIPFAEPPVGSRRFMPPEPKRPWSGVLDATTFQNVCYQYVDTLYPGFEGTEMWNPNRELSEDCLYLNVWTPYPRPASPTPVLIWIYGGGFYSGAASLDVYDGRFLAQVEGAVLVSMNYRVGTFGFLALPGSREAPGNVGLLDQRLALQWVQENIAAFGGDPMSVTLFGESAGAASVGMHILSLPSRSLFHRAVLQSGTPNGPWATVSAGEARRRATLLARLVGCPPGGAGGNDTELIACLRTRPAQDLVDHEWHVLPQESIFRFSFVPVVDGDFLSDTPEALINTGDFQDLQVLVGVVKDEGSYFLVYGVPGFSKDNESLISRAQFLAGVRIGVPQASDLAAEAVVLHYTDWLHPEDPTHLRDAMSAVVGDHNVVCPVAQLAGRLAAQGARVYAYIFEHRASTLTWPLWMGVPHGYEIEFIFGLPLDPSLNYTTEERIFAQRLMKYWTNFARTGDPNDPRDSKSPQWPPYTTAAQQYVSLNLKPLEVRRGLRAQTCAFWNRFLPKLLSATDTLDEAERQWKAEFHRWSSYMVHWKNQFDHYSKQERCSDL.

A signal peptide spans 1-31 (MRPPWYPLHTPSLAFPLLFLLLSLLGGGARA). Residues Cys100 and Cys127 are joined by a disulfide bond. Residue Ser234 is the Acyl-ester intermediate of the active site. A disulfide bond links Cys288 and Cys303. Asn296 carries an N-linked (GlcNAc...) asparagine glycan. Glu365 functions as the Charge relay system in the catalytic mechanism. An N-linked (GlcNAc...) asparagine glycan is attached at Asn381. A disulfide bridge links Cys440 with Cys560. The active-site Charge relay system is the His478. Asn495 carries N-linked (GlcNAc...) asparagine glycosylation.

This sequence belongs to the type-B carboxylesterase/lipase family. As to quaternary structure, isoform H generates GPI-anchored dimers; disulfide linked. Isoform T generates multiple structures, ranging from monomers and dimers to collagen-tailed and hydrophobic-tailed forms, in which catalytic tetramers are associated with anchoring proteins that attach them to the basal lamina or to cell membranes. In the collagen-tailed forms, isoform T subunits are associated with a specific collagen, COLQ, which triggers the formation of isoform T tetramers, from monomers and dimers. Interacts with PRIMA1. The interaction with PRIMA1 is required to anchor it to the basal lamina of cells and organize into tetramers. In terms of tissue distribution, predominates in most expressing tissues except erythrocytes where a glycophospholipid-attached form of ACHE predominates.

It localises to the synapse. Its subcellular location is the secreted. It is found in the cell membrane. It carries out the reaction acetylcholine + H2O = choline + acetate + H(+). Terminates signal transduction at the neuromuscular junction by rapid hydrolysis of the acetylcholine released into the synaptic cleft. This chain is Acetylcholinesterase (Ache), found in Mus musculus (Mouse).